Reading from the N-terminus, the 156-residue chain is Crossover junction endodeoxyribonuclease RuvC (156 aa).

Residues D7, E66, and D138 contribute to the active site. Mg(2+)-binding residues include D7, E66, and D138.

It belongs to the RuvC family. As to quaternary structure, homodimer which binds Holliday junction (HJ) DNA. The HJ becomes 2-fold symmetrical on binding to RuvC with unstacked arms; it has a different conformation from HJ DNA in complex with RuvA. In the full resolvosome a probable DNA-RuvA(4)-RuvB(12)-RuvC(2) complex forms which resolves the HJ. Mg(2+) serves as cofactor.

It localises to the cytoplasm. It carries out the reaction Endonucleolytic cleavage at a junction such as a reciprocal single-stranded crossover between two homologous DNA duplexes (Holliday junction).. Functionally, the RuvA-RuvB-RuvC complex processes Holliday junction (HJ) DNA during genetic recombination and DNA repair. Endonuclease that resolves HJ intermediates. Cleaves cruciform DNA by making single-stranded nicks across the HJ at symmetrical positions within the homologous arms, yielding a 5'-phosphate and a 3'-hydroxyl group; requires a central core of homology in the junction. The consensus cleavage sequence is 5'-(A/T)TT(C/G)-3'. Cleavage occurs on the 3'-side of the TT dinucleotide at the point of strand exchange. HJ branch migration catalyzed by RuvA-RuvB allows RuvC to scan DNA until it finds its consensus sequence, where it cleaves and resolves the cruciform DNA. The protein is Crossover junction endodeoxyribonuclease RuvC of Ehrlichia chaffeensis (strain ATCC CRL-10679 / Arkansas).